The chain runs to 235 residues: Ribonuclease 3 (235 aa).

The RNase III domain maps to 6 to 131 (IDQLFKLTGH…LIAVMYLDGG (126 aa)). Glu44 serves as a coordination point for Mg(2+). Residue Asp48 is part of the active site. Mg(2+) is bound by residues Asp117 and Glu120. The active site involves Glu120. Residues 156–225 (DAKTELQEWA…AEKILRREGV (70 aa)) form the DRBM domain.

Belongs to the ribonuclease III family. In terms of assembly, homodimer. Mg(2+) serves as cofactor.

The protein localises to the cytoplasm. The catalysed reaction is Endonucleolytic cleavage to 5'-phosphomonoester.. Its function is as follows. Digests double-stranded RNA. Involved in the processing of primary rRNA transcript to yield the immediate precursors to the large and small rRNAs (23S and 16S). Processes some mRNAs, and tRNAs when they are encoded in the rRNA operon. Processes pre-crRNA and tracrRNA of type II CRISPR loci if present in the organism. The protein is Ribonuclease 3 of Bartonella tribocorum (strain CIP 105476 / IBS 506).